The primary structure comprises 394 residues: Large ribosomal subunit protein mL44 (394 aa).

The N-terminal 21 residues, 1 to 21, are a transit peptide targeting the mitochondrion; the sequence is MFRHVAQNLGSRNTSIQSYRL.

This sequence belongs to the ribonuclease III family. Mitochondrion-specific ribosomal protein mL44 subfamily. Component of the mitochondrial large ribosomal subunit (mt-LSU).

Its subcellular location is the mitochondrion. Functionally, component of the mitochondrial ribosome. May have a function in the assembly/stability of nascent mitochondrial polypeptides exiting the ribosome. The protein is Large ribosomal subunit protein mL44 of Caenorhabditis elegans.